The sequence spans 274 residues: MVGPGLYPEIGKKARDLLYRDYQTDHKFTLTTYTSNGVAITATSTKKADLIFGEIQSQIKNKNITVDVKANSDSNVVTTVTVDELTPGLKSILSFAVPDQRSGKFELQYSHDYAGVSASIGLTASPVVNLSSVFGTKALAVGADVSLDTATGNLTKYNAGLSFSNDDLIASLNLNNKGDSLTASYYHIVNHSATAVGAELTHSFSSNENSLTFGTQHTLDPLTVVKARFNNSGKASALLQHEWRPKSVWTISAEVDTKAIDKSSKVGIAVALKP.

The protein belongs to the eukaryotic mitochondrial porin (TC 1.B.8.1) family. In terms of tissue distribution, expressed in shoots and roots. Also expressed in callus, leaves, panicles, sheaths and stems.

It localises to the mitochondrion outer membrane. Forms a channel through the mitochondrial outer membrane that allows diffusion of small hydrophilic molecules. The channel adopts an open conformation at low or zero membrane potential and a closed conformation at potentials above 30-40 mV. The open state has a weak anion selectivity whereas the closed state is cation-selective. This is Mitochondrial outer membrane protein porin 1 (VDAC1) from Oryza sativa subsp. japonica (Rice).